The primary structure comprises 586 residues: NudC domain-containing protein 1 (586 aa).

The 90-residue stretch at 275–364 (KREPLYNWQQ…EPGCTWAELV (90 aa)) folds into the CS domain.

It localises to the cytoplasm. The protein localises to the nucleus. This Xenopus laevis (African clawed frog) protein is NudC domain-containing protein 1.